Consider the following 325-residue polypeptide: dITP/XTP pyrophosphatase (325 aa).

The unknown stretch occupies residues 1-128; sequence MKEKIYEYKD…KKVSELGDTI (128 aa). Residues 129–324 are NTP pyrophosphatase; sequence LIATRNEGKT…MEVFPAWQNA (196 aa). Position 132-137 (132-137) interacts with substrate; sequence TRNEGK. Residues glutamate 165 and aspartate 194 each coordinate Mg(2+). Aspartate 194 serves as the catalytic Proton acceptor. Substrate contacts are provided by residues serine 195, 278–281, lysine 301, and 306–307; these read FGYD and HR.

The protein belongs to the HAM1 NTPase family. Homodimer. Mg(2+) serves as cofactor.

The catalysed reaction is XTP + H2O = XMP + diphosphate + H(+). The enzyme catalyses dITP + H2O = dIMP + diphosphate + H(+). It carries out the reaction ITP + H2O = IMP + diphosphate + H(+). Functionally, pyrophosphatase that catalyzes the hydrolysis of nucleoside triphosphates to their monophosphate derivatives, with a high preference for the non-canonical purine nucleotides XTP (xanthosine triphosphate), dITP (deoxyinosine triphosphate) and ITP. Seems to function as a house-cleaning enzyme that removes non-canonical purine nucleotides from the nucleotide pool, thus preventing their incorporation into DNA/RNA and avoiding chromosomal lesions. This chain is dITP/XTP pyrophosphatase, found in Streptococcus mutans serotype c (strain ATCC 700610 / UA159).